A 435-amino-acid polypeptide reads, in one-letter code: 3-ketoacyl-CoA thiolase (435 aa).

Catalysis depends on cysteine 98, which acts as the Acyl-thioester intermediate. Active-site proton acceptor residues include histidine 391 and cysteine 421.

This sequence belongs to the thiolase-like superfamily. Thiolase family. In terms of assembly, heterotetramer of two alpha chains (FadJ) and two beta chains (FadI).

Its subcellular location is the cytoplasm. The catalysed reaction is an acyl-CoA + acetyl-CoA = a 3-oxoacyl-CoA + CoA. It functions in the pathway lipid metabolism; fatty acid beta-oxidation. Catalyzes the final step of fatty acid oxidation in which acetyl-CoA is released and the CoA ester of a fatty acid two carbons shorter is formed. This Vibrio vulnificus (strain CMCP6) protein is 3-ketoacyl-CoA thiolase.